A 392-amino-acid chain; its full sequence is 2-oxoisovalerate dehydrogenase subunit beta, mitochondrial (392 aa).

The transit peptide at 1-50 (MAVVAAAAGWLLRLRAAGAEGHWRRLPGAGLARGFLHPAATVEDAAQRRQ) directs the protein to the mitochondrion. Tyr152 contacts thiamine diphosphate. K(+) contacts are provided by Gly178, Leu180, Thr181, Cys228, and Asp231. Position 232 is an N6-acetyllysine (Lys232). Asn233 provides a ligand contact to K(+). N6-acetyllysine is present on Lys241.

Heterotetramer of 2 alpha/BCKDHA and 2 beta chains/BCKDHB that forms the branched-chain alpha-keto acid decarboxylase (E1) component of the BCKD complex. The branched-chain alpha-ketoacid dehydrogenase is a large complex composed of three major building blocks E1, E2 and E3. It is organized around E2, a 24-meric cubic core composed of DBT, to which are associated 6 to 12 copies of E1, and approximately 6 copies of the dehydrogenase E3, a DLD dimer. The cofactor is thiamine diphosphate.

It localises to the mitochondrion matrix. The enzyme catalyses N(6)-[(R)-lipoyl]-L-lysyl-[protein] + 3-methyl-2-oxobutanoate + H(+) = N(6)-[(R)-S(8)-2-methylpropanoyldihydrolipoyl]-L-lysyl-[protein] + CO2. In terms of biological role, together with BCKDHA forms the heterotetrameric E1 subunit of the mitochondrial branched-chain alpha-ketoacid dehydrogenase (BCKD) complex. The BCKD complex catalyzes the multi-step oxidative decarboxylation of alpha-ketoacids derived from the branched-chain amino-acids valine, leucine and isoleucine producing CO2 and acyl-CoA which is subsequently utilized to produce energy. The E1 subunit catalyzes the first step with the decarboxylation of the alpha-ketoacid forming an enzyme-product intermediate. A reductive acylation mediated by the lipoylamide cofactor of E2 extracts the acyl group from the E1 active site for the next step of the reaction. The protein is 2-oxoisovalerate dehydrogenase subunit beta, mitochondrial of Homo sapiens (Human).